A 142-amino-acid chain; its full sequence is MANSIYSTTMISNGGRDGRVFSPDNTFVQNLATPKEMGGQGGNDTNPEQLFAAGYSACFNSALSLILSQNKISDANPEVEITIELLKDDTDNGFKLGADIKVTLENMSQQDAEKFVEQAHQFCPYSKATRGNIDVQLDVTAQ.

The protein belongs to the OsmC/Ohr family.

This Staphylococcus epidermidis (strain ATCC 12228 / FDA PCI 1200) protein is Organic hydroperoxide resistance protein-like 2.